A 633-amino-acid polypeptide reads, in one-letter code: Pesticidal crystal protein Cry2Aa (633 aa).

Belongs to the delta endotoxin family.

Functionally, promotes colloidosmotic lysis by binding to the midgut epithelial cells of both dipteran (Aedes aegypti) and lepidopteran (Manduca sexta) larvae. This chain is Pesticidal crystal protein Cry2Aa (cry2Aa), found in Bacillus thuringiensis subsp. kurstaki.